We begin with the raw amino-acid sequence, 341 residues long: Platelet-activating factor receptor (341 aa).

At 1-16 the chain is on the extracellular side; the sequence is MEHNGSFRVDSEFRYT. An N-linked (GlcNAc...) asparagine glycan is attached at Asn-4. Residues 17 to 38 form a helical membrane-spanning segment; sequence LFPIVYSVIFILGVVANGYVLW. Residues 39–54 are Cytoplasmic-facing; the sequence is VFANLYPSKKLNEIKI. The helical transmembrane segment at 55-74 threads the bilayer; it reads FMVNLTMADLLFLITLPLWI. Residues 75 to 91 are Extracellular-facing; sequence VYYYNEGDWILPNFLCN. An intrachain disulfide couples Cys-90 to Cys-173. The chain crosses the membrane as a helical span at residues 92 to 113; it reads VAGCLFFINTYCSVAFLGVITY. Residues 114 to 133 lie on the Cytoplasmic side of the membrane; that stretch reads NRYQAVAYPIKTAQATTRKR. Residues 134–155 traverse the membrane as a helical segment; that stretch reads GISLSLIIWVSIVATASYFLAT. At 156–184 the chain is on the extracellular side; that stretch reads DSTNLVPNKDGSGNITRCFEHYEPYSVPI. N-linked (GlcNAc...) asparagine glycosylation occurs at Asn-169. The chain crosses the membrane as a helical span at residues 185 to 205; sequence LVVHVFIAFCFFLVFFLIFYC. Residues 206-233 lie on the Cytoplasmic side of the membrane; sequence NLVIIHTLLTQPMRQQRKAGVKRRALWM. A helical transmembrane segment spans residues 234-254; the sequence is VCTVLAVFIICFVPHHVVQLP. Over 255-275 the chain is Extracellular; it reads WTLAELGYQTNFHQAINDAHQ. A helical membrane pass occupies residues 276–295; it reads ITLCLLSTNCVLDPVIYCFL. Residues 296-341 lie on the Cytoplasmic side of the membrane; the sequence is TKKFRKHLSEKFYSMRSSRKCSRATSDTCTEVIVPANQTPIVSLKN.

It belongs to the G-protein coupled receptor 1 family. Interacts with ARRB1. In terms of tissue distribution, found in a range of organs. Expressed most strongly in spleen, followed by skeletal muscle, lung and small intestine. Expressed at moderate levels in the heart. Expressed at relatively low levels in the brain, liver and kidney.

The protein localises to the cell membrane. Receptor for platelet activating factor, a chemotactic phospholipid mediator that possesses potent inflammatory, smooth-muscle contractile and hypotensive activity. Seems to mediate its action via a G protein that activates a phosphatidylinositol-calcium second messenger system. The polypeptide is Platelet-activating factor receptor (Ptafr) (Mus musculus (Mouse)).